The sequence spans 313 residues: Pseudouridine-5'-phosphate glycosidase (313 aa).

Glu34 acts as the Proton donor in catalysis. 2 residues coordinate substrate: Lys95 and Val115. Residue Asp147 coordinates Mn(2+). 149–151 lines the substrate pocket; that stretch reads SAD. The Nucleophile role is filled by Lys168.

It belongs to the pseudouridine-5'-phosphate glycosidase family. In terms of assembly, homotrimer. Requires Mn(2+) as cofactor.

It carries out the reaction D-ribose 5-phosphate + uracil = psi-UMP + H2O. In terms of biological role, catalyzes the reversible cleavage of pseudouridine 5'-phosphate (PsiMP) to ribose 5-phosphate and uracil. Functions biologically in the cleavage direction, as part of a pseudouridine degradation pathway. The polypeptide is Pseudouridine-5'-phosphate glycosidase (Deinococcus radiodurans (strain ATCC 13939 / DSM 20539 / JCM 16871 / CCUG 27074 / LMG 4051 / NBRC 15346 / NCIMB 9279 / VKM B-1422 / R1)).